A 444-amino-acid polypeptide reads, in one-letter code: Deoxyguanosinetriphosphate triphosphohydrolase-like protein (444 aa).

The tract at residues 1-28 (MTDAVWNERRLGEDKQRRNDHRSPYQRD) is disordered. The region spanning 59–250 (RLTHSLEVSQ…MELADDIAYA (192 aa)) is the HD domain.

This sequence belongs to the dGTPase family. Type 2 subfamily.

In Shewanella pealeana (strain ATCC 700345 / ANG-SQ1), this protein is Deoxyguanosinetriphosphate triphosphohydrolase-like protein.